The following is a 913-amino-acid chain: Probable TonB-dependent receptor HI_1217 (913 aa).

An N-terminal signal peptide occupies residues 1–27; sequence MKKAIKLNLITLGLINTIGMTITQAQA. Residues 42 to 165 enclose the TBDR plug domain; that stretch reads SNDKKPFTEA…LAGSANFRTL (124 aa). The TBDR beta-barrel domain maps to 176 to 913; it reads PFGIILKGMT…TYILSLNYKF (738 aa). A TonB C-terminal box motif is present at residues 896 to 913; that stretch reads LYNFARGRTYILSLNYKF.

The protein belongs to the TonB-dependent receptor family.

Its subcellular location is the cell outer membrane. In terms of biological role, probable receptor, TonB-dependent. The sequence is that of Probable TonB-dependent receptor HI_1217 from Haemophilus influenzae (strain ATCC 51907 / DSM 11121 / KW20 / Rd).